Consider the following 313-residue polypeptide: Ribosomal RNA small subunit methyltransferase H (313 aa).

Residues 31 to 33 (GGH), aspartate 51, phenylalanine 77, aspartate 95, and glutamine 102 each bind S-adenosyl-L-methionine.

Belongs to the methyltransferase superfamily. RsmH family.

Its subcellular location is the cytoplasm. It catalyses the reaction cytidine(1402) in 16S rRNA + S-adenosyl-L-methionine = N(4)-methylcytidine(1402) in 16S rRNA + S-adenosyl-L-homocysteine + H(+). In terms of biological role, specifically methylates the N4 position of cytidine in position 1402 (C1402) of 16S rRNA. This chain is Ribosomal RNA small subunit methyltransferase H, found in Xylella fastidiosa (strain M12).